Reading from the N-terminus, the 119-residue chain is Small ribosomal subunit protein uS13 (119 aa).

The disordered stretch occupies residues 94-119; it reads GLPVRGQRTQTNARTRKGPRRGPAGK.

This sequence belongs to the universal ribosomal protein uS13 family. In terms of assembly, part of the 30S ribosomal subunit. Forms a loose heterodimer with protein S19. Forms two bridges to the 50S subunit in the 70S ribosome.

Its function is as follows. Located at the top of the head of the 30S subunit, it contacts several helices of the 16S rRNA. In the 70S ribosome it contacts the 23S rRNA (bridge B1a) and protein L5 of the 50S subunit (bridge B1b), connecting the 2 subunits; these bridges are implicated in subunit movement. Contacts the tRNAs in the A and P-sites. The sequence is that of Small ribosomal subunit protein uS13 from Alkalilimnicola ehrlichii (strain ATCC BAA-1101 / DSM 17681 / MLHE-1).